Here is a 194-residue protein sequence, read N- to C-terminus: ATP-dependent Clp protease proteolytic subunit 1 (194 aa).

S99 (nucleophile) is an active-site residue. H124 is a catalytic residue.

Belongs to the peptidase S14 family. Fourteen ClpP subunits assemble into 2 heptameric rings which stack back to back to give a disk-like structure with a central cavity, resembling the structure of eukaryotic proteasomes.

The protein resides in the cytoplasm. It catalyses the reaction Hydrolysis of proteins to small peptides in the presence of ATP and magnesium. alpha-casein is the usual test substrate. In the absence of ATP, only oligopeptides shorter than five residues are hydrolyzed (such as succinyl-Leu-Tyr-|-NHMec, and Leu-Tyr-Leu-|-Tyr-Trp, in which cleavage of the -Tyr-|-Leu- and -Tyr-|-Trp bonds also occurs).. Its function is as follows. Cleaves peptides in various proteins in a process that requires ATP hydrolysis. Has a chymotrypsin-like activity. Plays a major role in the degradation of misfolded proteins. The polypeptide is ATP-dependent Clp protease proteolytic subunit 1 (Borreliella burgdorferi (strain ATCC 35210 / DSM 4680 / CIP 102532 / B31) (Borrelia burgdorferi)).